The following is a 337-amino-acid chain: Adenylosuccinate synthetase (337 aa).

Residues 12–18 (GDEGKGK) and 42–44 (GHT) contribute to the GTP site. Asp-13 (proton acceptor) is an active-site residue. Residues Asp-13 and Gly-42 each contribute to the Mg(2+) site. IMP contacts are provided by residues 13 to 16 (DEGK), 40 to 43 (NAGH), Thr-124, Arg-138, Gln-176, Thr-191, and Arg-253. The Proton donor role is filled by His-43. 249–255 (TVTGRRR) contributes to the substrate binding site. Residues Arg-255, 281 to 283 (GVD), and 321 to 323 (STG) contribute to the GTP site.

It belongs to the adenylosuccinate synthetase family. As to quaternary structure, homodimer. Mg(2+) is required as a cofactor.

It is found in the cytoplasm. It catalyses the reaction IMP + L-aspartate + GTP = N(6)-(1,2-dicarboxyethyl)-AMP + GDP + phosphate + 2 H(+). Its pathway is purine metabolism; AMP biosynthesis via de novo pathway; AMP from IMP: step 1/2. Plays an important role in the de novo pathway of purine nucleotide biosynthesis. Catalyzes the first committed step in the biosynthesis of AMP from IMP. The chain is Adenylosuccinate synthetase from Archaeoglobus fulgidus (strain ATCC 49558 / DSM 4304 / JCM 9628 / NBRC 100126 / VC-16).